Here is a 455-residue protein sequence, read N- to C-terminus: UDP-N-acetylmuramoylalanine--D-glutamate ligase (455 aa).

120–126 (GSNGKTT) contacts ATP.

Belongs to the MurCDEF family.

The protein localises to the cytoplasm. It catalyses the reaction UDP-N-acetyl-alpha-D-muramoyl-L-alanine + D-glutamate + ATP = UDP-N-acetyl-alpha-D-muramoyl-L-alanyl-D-glutamate + ADP + phosphate + H(+). Its pathway is cell wall biogenesis; peptidoglycan biosynthesis. Functionally, cell wall formation. Catalyzes the addition of glutamate to the nucleotide precursor UDP-N-acetylmuramoyl-L-alanine (UMA). The chain is UDP-N-acetylmuramoylalanine--D-glutamate ligase from Pediococcus pentosaceus (strain ATCC 25745 / CCUG 21536 / LMG 10740 / 183-1w).